A 633-amino-acid polypeptide reads, in one-letter code: Beta-myrcene synthase TPS15CT (633 aa).

The N-terminal 55 residues, 1 to 55 (MHCMAVHQFSPSIVSSLPTISTYNNNHFCRFFTPKTSISPISKTKSKSSTCYPIQ), are a transit peptide targeting the chloroplast. The (2E)-geranyl diphosphate site is built by Arg344, Asp381, Asp385, Arg525, and Asp528. Mg(2+) is bound by residues Asp381 and Asp385. The DDXXD motif motif lies at 381 to 385 (DDIYD). 3 residues coordinate Mg(2+): Asp528, Thr532, and Glu536.

The protein belongs to the terpene synthase family. Tpsb subfamily. Requires Mg(2+) as cofactor. Mn(2+) serves as cofactor.

The protein resides in the plastid. It localises to the chloroplast. It catalyses the reaction (2E)-geranyl diphosphate = beta-myrcene + diphosphate. Its pathway is secondary metabolite biosynthesis; terpenoid biosynthesis. In terms of biological role, involved in monoterpene (C10) olefins biosynthesis, constituants of cannabinoids and terpenoids-rich resins. Catalyzes strictly the conversion of (2E)-geranyl diphosphate to beta-myrcene. The chain is Beta-myrcene synthase TPS15CT from Cannabis sativa (Hemp).